A 275-amino-acid chain; its full sequence is Ribosomal RNA small subunit methyltransferase A (275 aa).

Residues Asn19, Leu21, Gly46, Glu71, Asp94, and Asn117 each coordinate S-adenosyl-L-methionine.

Belongs to the class I-like SAM-binding methyltransferase superfamily. rRNA adenine N(6)-methyltransferase family. RsmA subfamily.

Its subcellular location is the cytoplasm. The enzyme catalyses adenosine(1518)/adenosine(1519) in 16S rRNA + 4 S-adenosyl-L-methionine = N(6)-dimethyladenosine(1518)/N(6)-dimethyladenosine(1519) in 16S rRNA + 4 S-adenosyl-L-homocysteine + 4 H(+). Functionally, specifically dimethylates two adjacent adenosines (A1518 and A1519) in the loop of a conserved hairpin near the 3'-end of 16S rRNA in the 30S particle. May play a critical role in biogenesis of 30S subunits. The polypeptide is Ribosomal RNA small subunit methyltransferase A (Burkholderia thailandensis (strain ATCC 700388 / DSM 13276 / CCUG 48851 / CIP 106301 / E264)).